A 279-amino-acid chain; its full sequence is MAARVIDGKAVAAALRAEVAARAATLPYAPGLAVVLVGEDPASQVYVRNKERAAKAAGFASETIRLPASASQAELLALIARLNHDPAVDGILVQLPLPAGIDPQAVIRAIDPAKDVDGFHPDNVAALALGTPFLVPCTPRGVMKLLAAAGIAPRGARALVLGRSNIVGRPMAALLLAADATVTIAHSRTRDLAAECRRAEILIAAVGRAEMVRGDWVSPGATVIDVGINRTAAGGLVGDVAYAEAAAVAGAITPVPGGVGPMTIACLLENTLIAAAARR.

NADP(+) is bound by residues 162 to 164 (GRS), S187, and I228.

The protein belongs to the tetrahydrofolate dehydrogenase/cyclohydrolase family. As to quaternary structure, homodimer.

The enzyme catalyses (6R)-5,10-methylene-5,6,7,8-tetrahydrofolate + NADP(+) = (6R)-5,10-methenyltetrahydrofolate + NADPH. It catalyses the reaction (6R)-5,10-methenyltetrahydrofolate + H2O = (6R)-10-formyltetrahydrofolate + H(+). The protein operates within one-carbon metabolism; tetrahydrofolate interconversion. Functionally, catalyzes the oxidation of 5,10-methylenetetrahydrofolate to 5,10-methenyltetrahydrofolate and then the hydrolysis of 5,10-methenyltetrahydrofolate to 10-formyltetrahydrofolate. This Acidiphilium cryptum (strain JF-5) protein is Bifunctional protein FolD.